Consider the following 179-residue polypeptide: Large ribosomal subunit protein uL6 (179 aa).

The protein belongs to the universal ribosomal protein uL6 family. In terms of assembly, part of the 50S ribosomal subunit.

This protein binds to the 23S rRNA, and is important in its secondary structure. It is located near the subunit interface in the base of the L7/L12 stalk, and near the tRNA binding site of the peptidyltransferase center. The chain is Large ribosomal subunit protein uL6 from Bifidobacterium longum (strain DJO10A).